Reading from the N-terminus, the 124-residue chain is Prefoldin subunit beta (124 aa).

It belongs to the prefoldin subunit beta family. Heterohexamer of two alpha and four beta subunits.

It is found in the cytoplasm. In terms of biological role, molecular chaperone capable of stabilizing a range of proteins. Seems to fulfill an ATP-independent, HSP70-like function in archaeal de novo protein folding. The protein is Prefoldin subunit beta of Pyrobaculum arsenaticum (strain DSM 13514 / JCM 11321 / PZ6).